The primary structure comprises 677 residues: UvrABC system protein B (677 aa).

The 389-residue stretch at 26–414 (DNLDAGLAHQ…SGNEVVEQVV (389 aa)) folds into the Helicase ATP-binding domain. Position 39–46 (39–46 (GVTGSGKT)) interacts with ATP. The Beta-hairpin motif lies at 92-115 (YYDYYQPEAYVPTTDTFIEKDASI). Positions 432–598 (QVDDLMSEIR…GLNKDITDVM (167 aa)) constitute a Helicase C-terminal domain. The UVR domain maps to 637–672 (MKEIDAKEKEMYKAAQNLEFEQAGKLRDEVAELREQ).

The protein belongs to the UvrB family. As to quaternary structure, forms a heterotetramer with UvrA during the search for lesions. Interacts with UvrC in an incision complex.

It is found in the cytoplasm. Its function is as follows. The UvrABC repair system catalyzes the recognition and processing of DNA lesions. A damage recognition complex composed of 2 UvrA and 2 UvrB subunits scans DNA for abnormalities. Upon binding of the UvrA(2)B(2) complex to a putative damaged site, the DNA wraps around one UvrB monomer. DNA wrap is dependent on ATP binding by UvrB and probably causes local melting of the DNA helix, facilitating insertion of UvrB beta-hairpin between the DNA strands. Then UvrB probes one DNA strand for the presence of a lesion. If a lesion is found the UvrA subunits dissociate and the UvrB-DNA preincision complex is formed. This complex is subsequently bound by UvrC and the second UvrB is released. If no lesion is found, the DNA wraps around the other UvrB subunit that will check the other stand for damage. In Idiomarina loihiensis (strain ATCC BAA-735 / DSM 15497 / L2-TR), this protein is UvrABC system protein B.